The chain runs to 199 residues: uncharacterized protein (199 aa).

4 consecutive transmembrane segments (helical) span residues 40–60, 86–106, 117–137, and 166–186; these read LLIC…FCFL, VLTG…TFPF, TSWP…LTSS, and FLLA…ALIL.

Its subcellular location is the membrane. This is an uncharacterized protein from Saccharomyces cerevisiae (strain ATCC 204508 / S288c) (Baker's yeast).